We begin with the raw amino-acid sequence, 344 residues long: 4'-phosphopantetheinyl transferase NpgA (344 aa).

Belongs to the P-Pant transferase superfamily.

It carries out the reaction apo-[ACP] + CoA = holo-[ACP] + adenosine 3',5'-bisphosphate + H(+). Its function is as follows. Transfers the 4'-phosphopantetheine moiety from coenzyme A to a Ser of an acyl-carrier-protein. The enzyme is able to transfer the cofactor to a broad range of enzymes with acyl- or peptidyl-carrier protein domains. Required for primary biological processes such as growth and asexual/sexual development, and activates target enzymes involved in the synthesis of metabolites such as fatty acids, polyketides and nonribosomal peptides, lysine, siderophore, penicillin, sterigmatocystin, shamixantone, dehydroaustinol, and pigments. In Emericella nidulans (strain FGSC A4 / ATCC 38163 / CBS 112.46 / NRRL 194 / M139) (Aspergillus nidulans), this protein is 4'-phosphopantetheinyl transferase NpgA (npgA).